We begin with the raw amino-acid sequence, 72 residues long: Large ribosomal subunit protein uL29 (72 aa).

Belongs to the universal ribosomal protein uL29 family. As to quaternary structure, part of the 50S ribosomal subunit.

The protein is Large ribosomal subunit protein uL29 of Pyrococcus furiosus (strain ATCC 43587 / DSM 3638 / JCM 8422 / Vc1).